We begin with the raw amino-acid sequence, 488 residues long: UDP-N-acetylmuramate--L-alanine ligase (488 aa).

122–128 (GTHGKTT) contributes to the ATP binding site.

This sequence belongs to the MurCDEF family.

Its subcellular location is the cytoplasm. The catalysed reaction is UDP-N-acetyl-alpha-D-muramate + L-alanine + ATP = UDP-N-acetyl-alpha-D-muramoyl-L-alanine + ADP + phosphate + H(+). Its pathway is cell wall biogenesis; peptidoglycan biosynthesis. In terms of biological role, cell wall formation. The sequence is that of UDP-N-acetylmuramate--L-alanine ligase from Mycobacterium ulcerans (strain Agy99).